Consider the following 101-residue polypeptide: Protein PrgJ (101 aa).

It to S.flexneri MxiI.

Its function is as follows. Required for invasion of epithelial cells. In Salmonella typhimurium (strain LT2 / SGSC1412 / ATCC 700720), this protein is Protein PrgJ (prgJ).